The following is a 241-amino-acid chain: ATP-dependent Clp protease ATP-binding subunit CLPT2, chloroplastic (241 aa).

The transit peptide at 1 to 75 (MAAHSSCNFA…PRRIHKSAIS (75 aa)) directs the protein to the chloroplast. A Clp R domain is found at 91 to 237 (KPKWSWRAIK…ELESFASESG (147 aa)). Repeat stretches follow at residues 94–159 (WSWR…LGKA) and 171–237 (LTED…SESG).

Belongs to the ClpA/ClpB family. In terms of assembly, monomer and homodimer. The dimers monomerize before association to the P-ring. Component of the chloroplastic Clp protease core complex which consist of at least 16 proteins: CLPP4 (3 copies), CLPP5 (3 copies), CLPR4 (2 copies), ClpP1 (1 copy), CLPP6 (1 copy), CLPR2 (1 copy), CLPT1 (1 copy), CLPT2 (1 copy) and 3 copies of CLPP3 and/or CLPR1 and/or CLPR3. Interacts with AHK2. Interacts with CPN21. No interactions with CLPS1.

Its subcellular location is the plastid. The protein resides in the chloroplast. Functionally, accessory protein regulating the assembly of the plastidial Clp protease system. CLPT1 first binds to the heptameric P-ring containing the CLP3-6 subunits followed by CLPT2, and only then does the P-ring combine with the R-ring composed of the clpP1 and CLPR1-4 subunits. Once the core complex is fully assembled, it then associates to the CLPC chaperone partner to form the functional protease. CLPT2 and CLPT1 are partially redundant. The protein is ATP-dependent Clp protease ATP-binding subunit CLPT2, chloroplastic of Arabidopsis thaliana (Mouse-ear cress).